The sequence spans 798 residues: Nuclear intron maturase 4, mitochondrial (798 aa).

The transit peptide at 1-16 directs the protein to the mitochondrion; sequence MFRKRNLVLDLLRRCY. An intron maturase type-2 region spans residues 578–665; it reads VVAPTNAIGR…AAKYRIHENE (88 aa). The THAP-type zinc-finger motif lies at 729-778; it reads CFVIGCSMAAPAVYTLHAMERQKFPGWKTGFSVCIPSSLNGRRIGLCKQH.

It belongs to the plant nuclear intron maturase (nMat) family.

It localises to the mitochondrion. Its subcellular location is the plastid. The protein resides in the chloroplast. Functionally, nuclear-encoded maturase required for splicing of group-II introns in mitochondria. Involved in NAD1 pre-mRNA processing and maturation of introns 1, 3 and 4. Necessary for mitochondrial biogenesis during early developmental stages. Essential for respiratory holocomplex I biogenesis in mitochondria. This Arabidopsis thaliana (Mouse-ear cress) protein is Nuclear intron maturase 4, mitochondrial.